A 665-amino-acid polypeptide reads, in one-letter code: Dystrophia myotonica WD repeat-containing protein (665 aa).

Gly residues predominate over residues 1 to 11 (MAAGGAEGGPG). Disordered stretches follow at residues 1–91 (MAAG…PALP) and 100–119 (LGDP…LGAG). Alanine 2 bears the N-acetylalanine mark. Residues 52 to 64 (PAPPQPTQPPPGP) show a composition bias toward pro residues. Positions 65-76 (AAASGPGAAGPA) are enriched in low complexity. Residues 77–89 (SSPPPAGPGPGPA) show a composition bias toward pro residues. 4 WD repeats span residues 208–248 (IDKT…TSTP), 279–318 (VGEG…LRGL), 321–360 (SYFG…VVAR), and 363–445 (GHKS…LSPH). Disordered regions lie at residues 380–413 (AEEA…VSPL), 446–506 (PSLA…SMEP), 524–564 (RDRG…RSRL), and 628–665 (DEET…GTVV). Residues 450–491 (RTRTLPGTPGATPPASGSSRAGETGAGPLPRSLSRSNSLPHP) are compositionally biased toward low complexity. Serine 487 is subject to Phosphoserine. At arginine 543 the chain carries Omega-N-methylarginine. A WD 5 repeat occupies 592-629 (IAQERLTVLLFLEDCIITACQEGLICTWARPGKAFTDE). Positions 634-646 (QAGQASWPRSPSK) are enriched in polar residues. Low complexity predominate over residues 653 to 665 (SSQPGSSPSGTVV).

Component of the USP12/DMWD/WDR48 deubiquitinating complex. Interacts with USP12; promotes its enzymatic activity. Interacts with USP46. Widely expressed in brain where it localizes to the olfactory bulb, forebrain, thalamus, hippocampus, cerebellum, cortex and hypothalamus (at protein level). Expression seems to be particularly strong in areas of high synaptic density such as the glomerular layer of the olfactory bulb, and mossy fiber terminal fields of the hippocampus (at protein level). Expressed in retina, with strongest expression in the external and internal plexiform layers (at protein level). Strongly expressed in brain and testis. Also detected at lower levels in heart, kidney, liver, lung, ovary, uterus, bladder and skeletal muscle. In testis, expression seems to be restricted to secondary spermatocytes.

The protein resides in the cytoplasm. The protein localises to the nucleus. Its subcellular location is the perikaryon. It localises to the cell projection. It is found in the dendrite. Regulator of the deubiquitinating USP12/DMWD/WDR48 complex. Functions as a cofactor that promotes USP12 enzymatic activity. The polypeptide is Dystrophia myotonica WD repeat-containing protein (Dmwd) (Mus musculus (Mouse)).